Here is a 270-residue protein sequence, read N- to C-terminus: Glutamate 5-kinase (270 aa).

K15 serves as a coordination point for ATP. S55, D142, and N158 together coordinate substrate. ATP contacts are provided by residues 178 to 179 (SD) and 220 to 226 (TGGMLSK).

Belongs to the glutamate 5-kinase family.

It localises to the cytoplasm. It carries out the reaction L-glutamate + ATP = L-glutamyl 5-phosphate + ADP. It functions in the pathway amino-acid biosynthesis; L-proline biosynthesis; L-glutamate 5-semialdehyde from L-glutamate: step 1/2. In terms of biological role, catalyzes the transfer of a phosphate group to glutamate to form L-glutamate 5-phosphate. The protein is Glutamate 5-kinase of Streptococcus uberis (strain ATCC BAA-854 / 0140J).